Here is a 366-residue protein sequence, read N- to C-terminus: Chorismate synthase (366 aa).

Position 48 (Arg48) interacts with NADP(+). Residues 131-133 (RAS), 243-244 (NA), Gly288, 303-307 (KPTSS), and Arg329 each bind FMN.

It belongs to the chorismate synthase family. As to quaternary structure, homotetramer. FMNH2 is required as a cofactor.

It catalyses the reaction 5-O-(1-carboxyvinyl)-3-phosphoshikimate = chorismate + phosphate. It functions in the pathway metabolic intermediate biosynthesis; chorismate biosynthesis; chorismate from D-erythrose 4-phosphate and phosphoenolpyruvate: step 7/7. Its function is as follows. Catalyzes the anti-1,4-elimination of the C-3 phosphate and the C-6 proR hydrogen from 5-enolpyruvylshikimate-3-phosphate (EPSP) to yield chorismate, which is the branch point compound that serves as the starting substrate for the three terminal pathways of aromatic amino acid biosynthesis. This reaction introduces a second double bond into the aromatic ring system. This chain is Chorismate synthase, found in Bartonella henselae (strain ATCC 49882 / DSM 28221 / CCUG 30454 / Houston 1) (Rochalimaea henselae).